The following is a 141-amino-acid chain: Small ribosomal subunit protein uS12 (141 aa).

This sequence belongs to the universal ribosomal protein uS12 family. In terms of assembly, part of the 30S ribosomal subunit.

Functionally, with S4 and S5 plays an important role in translational accuracy. Located at the interface of the 30S and 50S subunits. This chain is Small ribosomal subunit protein uS12, found in Methanosphaera stadtmanae (strain ATCC 43021 / DSM 3091 / JCM 11832 / MCB-3).